The following is a 561-amino-acid chain: Urocanate hydratase (561 aa).

NAD(+) contacts are provided by residues 52–53 (GG), Q130, 176–178 (GMG), E196, R201, 242–243 (NA), 263–267 (QTSAH), 273–274 (YL), and Y322. The active site involves C410. G492 lines the NAD(+) pocket.

The protein belongs to the urocanase family. NAD(+) is required as a cofactor.

It is found in the cytoplasm. The enzyme catalyses 4-imidazolone-5-propanoate = trans-urocanate + H2O. It functions in the pathway amino-acid degradation; L-histidine degradation into L-glutamate; N-formimidoyl-L-glutamate from L-histidine: step 2/3. Catalyzes the conversion of urocanate to 4-imidazolone-5-propionate. This is Urocanate hydratase from Citrobacter koseri (strain ATCC BAA-895 / CDC 4225-83 / SGSC4696).